Reading from the N-terminus, the 453-residue chain is Ribosomal protein uS12 methylthiotransferase RimO (453 aa).

In terms of domain architecture, MTTase N-terminal spans proline 5–proline 120. [4Fe-4S] cluster contacts are provided by cysteine 14, cysteine 50, cysteine 79, cysteine 151, cysteine 155, and cysteine 158. Residues leucine 137 to glutamine 382 form the Radical SAM core domain. Positions glutamine 385–valine 453 constitute a TRAM domain.

This sequence belongs to the methylthiotransferase family. RimO subfamily. It depends on [4Fe-4S] cluster as a cofactor.

It localises to the cytoplasm. The enzyme catalyses L-aspartate(89)-[ribosomal protein uS12]-hydrogen + (sulfur carrier)-SH + AH2 + 2 S-adenosyl-L-methionine = 3-methylsulfanyl-L-aspartate(89)-[ribosomal protein uS12]-hydrogen + (sulfur carrier)-H + 5'-deoxyadenosine + L-methionine + A + S-adenosyl-L-homocysteine + 2 H(+). Functionally, catalyzes the methylthiolation of an aspartic acid residue of ribosomal protein uS12. The chain is Ribosomal protein uS12 methylthiotransferase RimO from Burkholderia ambifaria (strain ATCC BAA-244 / DSM 16087 / CCUG 44356 / LMG 19182 / AMMD) (Burkholderia cepacia (strain AMMD)).